Here is a 541-residue protein sequence, read N- to C-terminus: Long-chain-fatty-acid--CoA ligase (541 aa).

Position 184 (Thr184) interacts with Mg(2+). Residues Val231 and Trp234 each coordinate ATP. The tetradecanoyl-AMP site is built by Gly302, Gln322, Gly323, and Thr327. Gly323 and Thr327 together coordinate ATP. A Mg(2+)-binding site is contributed by Glu328. ATP contacts are provided by Asp418, Lys435, Lys439, and Trp444. Asp418, Lys435, and Lys439 together coordinate tetradecanoyl-AMP.

Belongs to the ATP-dependent AMP-binding enzyme family. Forms a domain swapped homodimer. It depends on Mg(2+) as a cofactor.

It carries out the reaction a long-chain fatty acid + ATP + CoA = a long-chain fatty acyl-CoA + AMP + diphosphate. The enzyme catalyses tetradecanoate + ATP + CoA = tetradecanoyl-CoA + AMP + diphosphate. The catalysed reaction is hexadecanoate + ATP + CoA = hexadecanoyl-CoA + AMP + diphosphate. Its pathway is lipid metabolism; fatty acid metabolism. Catalyzes the esterification of a number of long chain fatty acids with CoA, resulting in the formation of long-chain fatty acyl-CoA. Myristate (C14) is the most efficiently processed fatty acid, followed by palmitate (C16). Also catalyzes the esterification of stearate (C18) and laurate (C12), but at lower efficiency. Does not catalyze the esterification of the unsaturated fatty acids mysteroleic and palmitoleic acids in vitro. The chain is Long-chain-fatty-acid--CoA ligase from Thermus thermophilus (strain ATCC 27634 / DSM 579 / HB8).